The chain runs to 394 residues: Xylose isomerase (394 aa).

Residues His-54 and Asp-57 contribute to the active site. The Mg(2+) site is built by Glu-180, Glu-216, His-219, Asp-244, Asp-254, Asp-256, and Asp-285. The tract at residues 370–394 (VRTPRPAGDGPPAGRARLTVAPRKR) is disordered. The span at 373 to 386 (PRPAGDGPPAGRAR) shows a compositional bias: low complexity.

This sequence belongs to the xylose isomerase family. Homotetramer. Mg(2+) is required as a cofactor.

The protein resides in the cytoplasm. The enzyme catalyses alpha-D-xylose = alpha-D-xylulofuranose. Involved in D-xylose catabolism. The polypeptide is Xylose isomerase (xylA) (Streptomyces rochei (Streptomyces parvullus)).